The primary structure comprises 383 residues: Lipid-A-disaccharide synthase (383 aa).

The protein belongs to the LpxB family.

The enzyme catalyses a lipid X + a UDP-2-N,3-O-bis[(3R)-3-hydroxyacyl]-alpha-D-glucosamine = a lipid A disaccharide + UDP + H(+). It functions in the pathway bacterial outer membrane biogenesis; LPS lipid A biosynthesis. Its function is as follows. Condensation of UDP-2,3-diacylglucosamine and 2,3-diacylglucosamine-1-phosphate to form lipid A disaccharide, a precursor of lipid A, a phosphorylated glycolipid that anchors the lipopolysaccharide to the outer membrane of the cell. The chain is Lipid-A-disaccharide synthase from Anaeromyxobacter sp. (strain K).